The following is a 422-amino-acid chain: Glucose-1-phosphate adenylyltransferase (422 aa).

Alpha-D-glucose 1-phosphate is bound by residues Tyr-110, Gly-175, 190–191 (EK), and Ser-208.

Belongs to the bacterial/plant glucose-1-phosphate adenylyltransferase family. As to quaternary structure, homotetramer.

It catalyses the reaction alpha-D-glucose 1-phosphate + ATP + H(+) = ADP-alpha-D-glucose + diphosphate. It functions in the pathway glycan biosynthesis; glycogen biosynthesis. Its function is as follows. Involved in the biosynthesis of ADP-glucose, a building block required for the elongation reactions to produce glycogen. Catalyzes the reaction between ATP and alpha-D-glucose 1-phosphate (G1P) to produce pyrophosphate and ADP-Glc. The chain is Glucose-1-phosphate adenylyltransferase from Hydrogenovibrio crunogenus (strain DSM 25203 / XCL-2) (Thiomicrospira crunogena).